We begin with the raw amino-acid sequence, 303 residues long: Golgi to ER traffic protein 2 (303 aa).

The Cytoplasmic portion of the chain corresponds to 1–168 (MSEQPLSQDE…NAYNIYQQRL (168 aa)). The interval 19-86 (RQAKMARGKA…DPEDDPDLMD (68 aa)) is disordered. A compositionally biased stretch (polar residues) spans 31 to 48 (RLNNILSQGSSVKGTTDP). The helical transmembrane segment at 169 to 189 (WKFRFSIIRFAAVLTNFFYHY) threads the bilayer. Residues 190 to 216 (LTIQDYSFTSSPHFYVRALAPHPAVNS) are Lumenal-facing. Residues 217-236 (FITWFSTCEVAILASFYLIT) traverse the membrane as a helical segment. The Cytoplasmic portion of the chain corresponds to 237–280 (SKNNIYANASDGNLLLKGISMGAMVLPQLRAYQPLVIRLAHYWE). The helical transmembrane segment at 281 to 301 (VFSMLLGDIFLVVVLFGLVSI) threads the bilayer. Over 302–303 (YN) the chain is Lumenal.

It belongs to the GET2 family. As to quaternary structure, component of the Golgi to ER traffic (GET) complex, which is composed of GET1, GET2 and GET3. Within the complex, GET1 and GET2 form a heterotetramer which is stabilized by phosphatidylinositol binding and which binds to the GET3 homodimer.

The protein localises to the endoplasmic reticulum membrane. It is found in the golgi apparatus membrane. Required for the post-translational delivery of tail-anchored (TA) proteins to the endoplasmic reticulum. Together with GET1, acts as a membrane receptor for soluble GET3, which recognizes and selectively binds the transmembrane domain of TA proteins in the cytosol. The GET complex cooperates with the HDEL receptor ERD2 to mediate the ATP-dependent retrieval of resident ER proteins that contain a C-terminal H-D-E-L retention signal from the Golgi to the ER. The chain is Golgi to ER traffic protein 2 from Debaryomyces hansenii (strain ATCC 36239 / CBS 767 / BCRC 21394 / JCM 1990 / NBRC 0083 / IGC 2968) (Yeast).